The chain runs to 163 residues: Protein FAM167B (163 aa).

Positions 73–132 (FDSMDSALEWLRRELREMQAQDRQLAGQLLRLRAQLHRLKMDQACHLHQELLDEAELELE) form a coiled coil.

The protein belongs to the FAM167 (SEC) family.

The chain is Protein FAM167B (FAM167B) from Homo sapiens (Human).